A 344-amino-acid polypeptide reads, in one-letter code: Lipase chaperone (344 aa).

The helical transmembrane segment at 14–34 (AVVYGVVGLAAIAGVAMWSGA) threads the bilayer.

This sequence belongs to the lipase chaperone family.

The protein resides in the cell inner membrane. Its function is as follows. May be involved in the folding of the extracellular lipase during its passage through the periplasm. This chain is Lipase chaperone (lifO), found in Burkholderia cepacia (Pseudomonas cepacia).